We begin with the raw amino-acid sequence, 247 residues long: UPF0273 protein PH0284 (247 aa).

Positions 3–247 (RRVKTGIPGV…VLKRGKVLEL (245 aa)) constitute a KaiC domain. An ATP-binding site is contributed by 30 to 37 (GGPGTGKT).

This sequence belongs to the UPF0273 family.

This chain is UPF0273 protein PH0284, found in Pyrococcus horikoshii (strain ATCC 700860 / DSM 12428 / JCM 9974 / NBRC 100139 / OT-3).